The primary structure comprises 234 residues: Protein CIST1 (234 aa).

An N-terminal signal peptide occupies residues 1–24; sequence MACPQLPPLLLLVLVVLLKAGVNY. The Extracellular portion of the chain corresponds to 25 to 180; that stretch reads NTPFTDIVTS…GPRELHRNPS (156 aa). The span at 41 to 121 shows a compositional bias: polar residues; that stretch reads SPVSSLISSP…THPSSGSPSA (81 aa). Residues 41–174 form a disordered region; that stretch reads SPVSSLISSP…PAPGDTGPRE (134 aa). The span at 122–140 shows a compositional bias: low complexity; the sequence is ELTPSSHSTLPSSESLTPH. The segment covering 141 to 159 has biased composition (polar residues); that stretch reads WSPTSHSPGTEPLTSTDQT. A helical transmembrane segment spans residues 181–201; it reads VVVVVCLLVSLLLIGSVVMAV. Over 202-234 the chain is Cytoplasmic; that stretch reads RFCHRNESKFENLDEVSMGSVNDRLSFAHHLQE.

It localises to the membrane. This Homo sapiens (Human) protein is Protein CIST1.